The primary structure comprises 103 residues: uncharacterized protein (103 aa).

2 stretches are compositionally biased toward polar residues: residues 1–10 (MSNSCSTSSY) and 18–28 (TRSGSNVNRNY). The segment at 1–28 (MSNSCSTSSYPIRRKTPTRSGSNVNRNY) is disordered.

This is an uncharacterized protein from Acanthamoeba polyphaga mimivirus (APMV).